Consider the following 466-residue polypeptide: Glutamate--tRNA ligase (466 aa).

The 'HIGH' region motif lies at 11–21 (PSPTGFIHLGN). The short motif at 243–247 (KMSKR) is the 'KMSKS' region element. Lysine 246 lines the ATP pocket.

It belongs to the class-I aminoacyl-tRNA synthetase family. Glutamate--tRNA ligase type 1 subfamily. In terms of assembly, monomer.

The protein resides in the cytoplasm. The enzyme catalyses tRNA(Glu) + L-glutamate + ATP = L-glutamyl-tRNA(Glu) + AMP + diphosphate. In terms of biological role, catalyzes the attachment of glutamate to tRNA(Glu) in a two-step reaction: glutamate is first activated by ATP to form Glu-AMP and then transferred to the acceptor end of tRNA(Glu). The chain is Glutamate--tRNA ligase from Cupriavidus necator (strain ATCC 17699 / DSM 428 / KCTC 22496 / NCIMB 10442 / H16 / Stanier 337) (Ralstonia eutropha).